A 1186-amino-acid polypeptide reads, in one-letter code: MYND-type zinc finger-containing chromatin reader ZMYND8 (1186 aa).

The segment covering 1–12 (MDISTRSKDPGS) has biased composition (basic and acidic residues). The segment at 1–57 (MDISTRSKDPGSAERTAQKRKFPSPPHSSNGHSPQDTSTSPIKKKKKPGLLNSNNKE) is disordered. Residues 1-850 (MDISTRSKDP…QQQQQQQNQQ (850 aa)) are required for interaction with CCNT1. Ser12 is covalently cross-linked (Glycyl lysine isopeptide (Lys-Gly) (interchain with G-Cter in SUMO2)). Ser24 bears the Phosphoserine mark. Glycyl lysine isopeptide (Lys-Gly) (interchain with G-Cter in SUMO2) cross-links involve residues Lys56 and Lys70. An interaction with histone H3K4me0 region spans residues 75 to 268 (TDPVDVVPQD…YLAACQKRDN (194 aa)). The interaction with histone H3K14ac stretch occupies residues 75-406 (TDPVDVVPQD…VKLNFDMTAS (332 aa)). A PHD-type zinc finger spans residues 88-133 (DFYCWVCHREGQVLCCELCPRVYHAKCLRLTSEPEGDWFCPECEKI). The segment at 88–327 (DFYCWVCHRE…INNCYLMSKE (240 aa)) is required for interaction with histone H3 and histone H4. The Zn(2+) site is built by Cys91, Cys94, Cys103, Cys106, His111, Cys114, Cys127, and Cys130. Residues 145-252 (AMTMLTIEQL…KICEHEMNEI (108 aa)) form the Bromo domain. 3 residues coordinate Zn(2+): Cys255, Cys258, and Cys274. The 51-residue stretch at 277–327 (PHPLVWAKLKGFPFWPAKALRDKDGQVDARFFGQHDRAWVPINNCYLMSKE) folds into the PWWP domain. A Glycyl lysine isopeptide (Lys-Gly) (interchain with G-Cter in SUMO2) cross-link involves residue Lys390. At Thr404 the chain carries Phosphothreonine. Phosphoserine is present on Ser406. Residues 412–512 (SKPVLSGGTG…TTKTDKTSTT (101 aa)) form a disordered region. Position 413 is an N6-acetyllysine; alternate (Lys413). Residue Lys413 forms a Glycyl lysine isopeptide (Lys-Gly) (interchain with G-Cter in SUMO2); alternate linkage. A phosphoserine mark is found at Ser417, Ser425, and Ser432. Positions 433–442 (PMSTNSSVHT) are enriched in polar residues. Position 444 is a phosphoserine (Ser444). A Glycyl lysine isopeptide (Lys-Gly) (interchain with G-Cter in SUMO2) cross-link involves residue Lys453. Residues Ser460, Ser462, Ser465, Ser486, Ser490, and Ser495 each carry the phosphoserine modification. The segment covering 472–489 (STASPASTKTGQAGSLSG) has biased composition (polar residues). Residue Lys505 forms a Glycyl lysine isopeptide (Lys-Gly) (interchain with G-Cter in SUMO2) linkage. Residues Ser514 and Ser523 each carry the phosphoserine modification. Lys530 is covalently cross-linked (Glycyl lysine isopeptide (Lys-Gly) (interchain with G-Cter in SUMO2)). Thr541 is modified (phosphothreonine). Phosphoserine is present on Ser547. Residue Lys549 forms a Glycyl lysine isopeptide (Lys-Gly) (interchain with G-Cter in SUMO2) linkage. Thr563 carries the post-translational modification Phosphothreonine. Residues 582 to 884 (TAVEHSDSED…ITQSPSTSTI (303 aa)) are disordered. Basic and acidic residues-rich tracts occupy residues 585-597 (EHSDSEDSEKSDS) and 606-631 (DEQKSKNEPEDTEDKEGCQMDKEPSA). Glycyl lysine isopeptide (Lys-Gly) (interchain with G-Cter in SUMO2) cross-links involve residues Lys611 and Lys645. A phosphoserine mark is found at Ser652 and Ser655. The span at 656–696 (EKADPGAVKDKASPEPEKDFSEKAKPSPHPIKDKLKGKDET) shows a compositional bias: basic and acidic residues. A Glycyl lysine isopeptide (Lys-Gly) (interchain with G-Cter in SUMO2) cross-link involves residue Lys657. Phosphoserine is present on residues Ser668, Ser682, Ser707, Ser709, and Ser737. Basic and acidic residues predominate over residues 718–738 (GEDHSGREGRKNKKEPKEPSP). A Phosphothreonine modification is found at Thr746. 2 positions are modified to phosphoserine: Ser754 and Ser756. The span at 766–799 (SSAQTSAAGATATTSTSSTVTVTAPAPAATGSPV) shows a compositional bias: low complexity. Residues 818 to 832 (VWNSSSKFQTSSQKW) are compositionally biased toward polar residues. The segment covering 835–857 (QKMQRQQQQQQQQNQQQQPQSSQ) has biased composition (low complexity). Residues 873–884 (KEITQSPSTSTI) show a composition bias toward polar residues. The segment at 875 to 1047 (ITQSPSTSTI…YCCWNTSYCD (173 aa)) is required for homodimerization. Cys1028, Cys1031, Cys1039, Cys1040, Cys1046, Cys1050, His1058, and Cys1062 together coordinate Zn(2+). The MYND-type zinc finger occupies 1028 to 1062 (CANCKKEAIFYCCWNTSYCDYPCQQAHWPEHMKSC). The segment at 1028-1062 (CANCKKEAIFYCCWNTSYCDYPCQQAHWPEHMKSC) is required for recruitment to DNA damage sites and for interaction with the NuRD complex, CHD4, HDAC1, HDAC2 and KDM1A. The segment at 1071 to 1186 (QEADAEVNTE…KESRLDTFWD (116 aa)) is disordered. Low complexity predominate over residues 1085 to 1103 (SSQGSSSSTQSAPSETASA). Residues 1104 to 1116 (SKEKETSAEKSKE) are compositionally biased toward basic and acidic residues. Lys1115 participates in a covalent cross-link: Glycyl lysine isopeptide (Lys-Gly) (interchain with G-Cter in SUMO2). Position 1119 is a phosphoserine (Ser1119). The span at 1121-1140 (LDLSGSRETPSSILLGSNQG) shows a compositional bias: polar residues. Position 1141 is a phosphoserine (Ser1141). The tract at residues 1147-1186 (NKSSWSSSDEKRGSTRSDHNTSTSTKSLLPKESRLDTFWD) is interaction with PRKCB1. Composition is skewed to basic and acidic residues over residues 1154-1165 (SDEKRGSTRSDH) and 1175-1186 (LPKESRLDTFWD).

Monomer and homodimer. Interacts with NuRD subcomplexes containing GATAD2A. Interacts with the histone deacetylase NuRD complex subunit CHD4; the interaction is direct, appears to occur with monomeric ZMYND8, and is increased following DNA damage. Interacts (via N-terminus) with the P-TEFb complex subunit CCNT1 (via central region); the interaction is direct and the association appears to occur between homodimeric ZMYND8 and the activated form of the P-TEFb complex. Interacts (via N-terminus) with DBN1 (via ADF-H domain); the interaction leads to sequestering of ZMYND8 in the cytoplasm. Interacts with the P-TEFb complex subunit CDK9; the association appears to occur between homodimeric ZMYND8 and the activated form of the P-TEFb complex. Interacts with EZH2; the interaction is dependent on the presence of chromatin. Interacts (via MYND domain) with the NuRD complex subunit GATAD2A. Interacts with histone H3 (via N-terminus) that is both methylated at 'Lys-4' (H3K4me1) and acetylated at 'Lys-14' (H3K14ac), with histone H3 (via N-terminus) unmodified at 'Lys-4' (H3K4me0) and acetylated at 'Lys-14' (H3K14ac), and with histone H3 (via N-terminus) di-methylated at 'Lys-36' (H3K36me2). Interacts (via Bromo domain) with histone H4 acetylated at 'Lys-16' (H4K16ac). Interacts with HDAC1. Interacts with HDAC2. Interacts with KDM1A. Interacts with KDM5C. Interacts with KDM5D. Interacts in vitro with PRKCB. Interacts with RNA polymerase II subunit POLR2A phosphorylated at 'Ser-5'. Interacts with ZNF592. Interacts with ZNF687. Does not interact with GATAD2B. Expressed in neurons (at protein level). Absent in astrocytes (at protein level). Expressed in all tissues examined with highest expression in brain, lung, pancreas, and placenta. Expressed in cutaneous T-cell lymphomas (CTCL).

It localises to the nucleus. The protein localises to the chromosome. It is found in the cytoplasm. In terms of biological role, chromatin reader that recognizes dual histone modifications such as histone H3.1 dimethylated at 'Lys-36' and histone H4 acetylated at 'Lys-16' (H3.1K36me2-H4K16ac) and histone H3 methylated at 'Lys-4' and histone H4 acetylated at 'Lys-14' (H3K4me1-H3K14ac). May act as a transcriptional corepressor for KDM5D by recognizing the dual histone signature H3K4me1-H3K14ac. May also act as a transcriptional corepressor for KDM5C and EZH2. Recognizes acetylated histone H4 and recruits the NuRD chromatin remodeling complex to damaged chromatin for transcriptional repression and double-strand break repair by homologous recombination. Also activates transcription elongation by RNA polymerase II through recruiting the P-TEFb complex to target promoters. Localizes to H3.1K36me2-H4K16ac marks at all-trans-retinoic acid (ATRA)-responsive genes and positively regulates their expression. Promotes neuronal differentiation by associating with regulatory regions within the MAPT gene, to enhance transcription of a protein-coding MAPT isoform and suppress the non-coding MAPT213 isoform. Suppresses breast cancer, and prostate cancer cell invasion and metastasis. The sequence is that of MYND-type zinc finger-containing chromatin reader ZMYND8 (ZMYND8) from Homo sapiens (Human).